The chain runs to 337 residues: Basic membrane protein A2 (337 aa).

An N-terminal signal peptide occupies residues 1–17; that stretch reads MNKLLLLILFECIIFLS. A lipid anchor (N-palmitoyl cysteine) is attached at cysteine 18. Cysteine 18 is lipidated: S-diacylglycerol cysteine.

This sequence belongs to the BMP lipoprotein family. As to quaternary structure, monomer.

It localises to the cell inner membrane. In terms of biological role, immunogenic protein. May be part of an ABC-type nucleoside uptake system involved in the purine salvage pathway. In Borrelia garinii subsp. bavariensis (strain ATCC BAA-2496 / DSM 23469 / PBi) (Borreliella bavariensis), this protein is Basic membrane protein A2 (bmpA2).